The primary structure comprises 231 residues: Ion-translocating oxidoreductase complex subunit E (231 aa).

6 helical membrane-spanning segments follow: residues 18 to 38 (ALVQ…ATNA), 39 to 59 (LGLG…ISTL), 63 to 83 (TPAE…VSAV), 86 to 106 (LINA…PLIV), 125 to 145 (ALSA…MFVL), and 182 to 202 (PFLL…MLAG).

Belongs to the NqrDE/RnfAE family. As to quaternary structure, the complex is composed of six subunits: RsxA, RsxB, RsxC, RsxD, RsxE and RsxG.

It localises to the cell inner membrane. Part of a membrane-bound complex that couples electron transfer with translocation of ions across the membrane. Required to maintain the reduced state of SoxR. This chain is Ion-translocating oxidoreductase complex subunit E, found in Shigella boydii serotype 18 (strain CDC 3083-94 / BS512).